A 1241-amino-acid chain; its full sequence is Phosphorylase b kinase regulatory subunit alpha, skeletal muscle isoform (1241 aa).

Phosphoserine is present on residues Ser-629, Ser-730, Ser-736, Ser-739, Ser-759, Ser-812, Ser-973, Ser-982, and Ser-986. The interval 811–841 (LSELYVKVGEIRHWGLIRYISGILRKKVEAL) is calmodulin-binding. At Ser-1008 the chain carries Phosphoserine; by autocatalysis. At Ser-1019 the chain carries Phosphoserine; by PKA. 2 positions are modified to phosphoserine: Ser-1021 and Ser-1024. Residues 1064-1104 (SKDSRQGQWQRRRRLDGALNRVPIGFYQKVWKILQKCHGLS) form a calmodulin-binding region. Ser-1131 carries the phosphoserine modification. The S-farnesyl cysteine moiety is linked to residue Cys-1238.

Belongs to the phosphorylase b kinase regulatory chain family. In terms of assembly, hexadecamer of 4 heterotetramers, each composed of alpha, beta, gamma, and delta subunits. Alpha (PHKA1 or PHKA2) and beta (PHKB) are regulatory subunits, gamma (PHKG1 or PHKG2) is the catalytic subunit, and delta is calmodulin. Although the final Cys may be farnesylated, the terminal tripeptide is probably not removed, and the C-terminus is not methylated. As to expression, both isoforms are expressed in muscle.

It localises to the cell membrane. Its pathway is glycan biosynthesis; glycogen metabolism. Its activity is regulated as follows. By phosphorylation of various serine residues and by calcium. Functionally, phosphorylase b kinase catalyzes the phosphorylation of serine in certain substrates, including troponin I. The alpha chain may bind calmodulin. The chain is Phosphorylase b kinase regulatory subunit alpha, skeletal muscle isoform (Phka1) from Mus musculus (Mouse).